The primary structure comprises 688 residues: Elongation factor G (688 aa).

In terms of domain architecture, tr-type G spans 8–282 (EKTRNIGIMA…AIIDYLPSPM (275 aa)). Residues 17 to 24 (AHIDAGKT), 81 to 85 (DTPGH), and 135 to 138 (NKMD) each bind GTP.

This sequence belongs to the TRAFAC class translation factor GTPase superfamily. Classic translation factor GTPase family. EF-G/EF-2 subfamily.

It is found in the cytoplasm. Its function is as follows. Catalyzes the GTP-dependent ribosomal translocation step during translation elongation. During this step, the ribosome changes from the pre-translocational (PRE) to the post-translocational (POST) state as the newly formed A-site-bound peptidyl-tRNA and P-site-bound deacylated tRNA move to the P and E sites, respectively. Catalyzes the coordinated movement of the two tRNA molecules, the mRNA and conformational changes in the ribosome. The chain is Elongation factor G from Phytoplasma mali (strain AT).